A 182-amino-acid polypeptide reads, in one-letter code: Ribosome maturation factor RimM (182 aa).

A PRC barrel domain is found at 103 to 182 (EDDYYWKDLM…RVEVDWDPGF (80 aa)).

It belongs to the RimM family. Binds ribosomal protein uS19.

The protein localises to the cytoplasm. In terms of biological role, an accessory protein needed during the final step in the assembly of 30S ribosomal subunit, possibly for assembly of the head region. Essential for efficient processing of 16S rRNA. May be needed both before and after RbfA during the maturation of 16S rRNA. It has affinity for free ribosomal 30S subunits but not for 70S ribosomes. This is Ribosome maturation factor RimM from Yersinia pestis (strain Pestoides F).